A 518-amino-acid chain; its full sequence is Major facilitator superfamily multidrug transporter mfsC (518 aa).

7 helical membrane passes run 27–47 (VLLT…SVLF), 65–85 (WVLI…GQLG), 88–108 (FGLE…NVIN), 123–143 (ISGV…SNTF), 152–172 (ALAI…VVGS), 183–203 (IFWL…LFLP), and 212–232 (PIDI…VYGL). The N-linked (GlcNAc...) asparagine glycan is linked to Asn-233. 7 helical membrane passes run 242 to 262 (SAAM…FLWV), 281 to 301 (FLVM…WFFI), 315 to 335 (ILTA…GVFA), 347 to 367 (ILVA…FAGP), 380 to 400 (TAII…SILL), 409 to 429 (AVAG…ILAG), and 455 to 475 (AFWL…VCYW).

The protein belongs to the major facilitator superfamily. EmrB family.

The protein localises to the membrane. Functionally, major facilitator superfamily transporter that may be involved in A.fumigatus adaptation to azoles such as vorizonazole. The polypeptide is Major facilitator superfamily multidrug transporter mfsC (Aspergillus fumigatus (strain ATCC MYA-4609 / CBS 101355 / FGSC A1100 / Af293) (Neosartorya fumigata)).